The chain runs to 98 residues: NADH-ubiquinone oxidoreductase chain 4L (98 aa).

A run of 3 helical transmembrane segments spans residues 2–22 (PSIF…TLVF), 29–49 (SLLC…LIIL), and 61–81 (ILLL…LVMV).

It belongs to the complex I subunit 4L family. In terms of assembly, core subunit of respiratory chain NADH dehydrogenase (Complex I) which is composed of 45 different subunits.

Its subcellular location is the mitochondrion inner membrane. It carries out the reaction a ubiquinone + NADH + 5 H(+)(in) = a ubiquinol + NAD(+) + 4 H(+)(out). Its function is as follows. Core subunit of the mitochondrial membrane respiratory chain NADH dehydrogenase (Complex I) which catalyzes electron transfer from NADH through the respiratory chain, using ubiquinone as an electron acceptor. Part of the enzyme membrane arm which is embedded in the lipid bilayer and involved in proton translocation. The polypeptide is NADH-ubiquinone oxidoreductase chain 4L (MT-ND4L) (Propithecus tattersalli (Golden-crowned Sifaka)).